The chain runs to 615 residues: TORTIFOLIA1-like protein 3 (615 aa).

5 HEAT repeats span residues 44–81 (GNLQ…SLPL), 86–123 (PFLS…RTTK), 125–163 (PFYS…SASD), 168–205 (RLGQ…AGGL), and 213–250 (GGLK…MERN). A disordered region spans residues 288-446 (VPDLSEEVSP…HHVLSENPNS (159 aa)). A compositionally biased stretch (polar residues) spans 318–347 (RVGSTPAKSRTHLVNRSTPPGSSLATTARK). The span at 391–406 (DEQHCDHDENAKETSH) shows a compositional bias: basic and acidic residues. The span at 407-426 (SSHNTVQKLGGVSSSLNGNI) shows a compositional bias: polar residues. S456 is modified (phosphoserine).

The polypeptide is TORTIFOLIA1-like protein 3 (Arabidopsis thaliana (Mouse-ear cress)).